We begin with the raw amino-acid sequence, 305 residues long: Coiled-coil domain-containing protein 83 (305 aa).

The segment at 1–25 (MDSSAKGSKKDAPDGPPKDSKLPVS) is disordered. Residues 8-21 (SKKDAPDGPPKDSK) are compositionally biased toward basic and acidic residues. Residues 37–186 (ENAVERFMFH…LEDEKKRISR (150 aa)) adopt a coiled-coil conformation.

This Mus musculus (Mouse) protein is Coiled-coil domain-containing protein 83 (Ccdc83).